A 283-amino-acid polypeptide reads, in one-letter code: Homeobox protein Hox-C12b (283 aa).

A DNA-binding region (homeobox) is located at residues 215 to 274 (TRKKRKPYSKLQLNELEGEFILNEFITRQRRRELSDRLNLTDQQVKIWFQNRRMKKKRLL).

Belongs to the Abd-B homeobox family.

It localises to the nucleus. Its function is as follows. Sequence-specific transcription factor which is part of a developmental regulatory system that provides cells with specific positional identities on the anterior-posterior axis. The polypeptide is Homeobox protein Hox-C12b (hoxc12b) (Danio rerio (Zebrafish)).